The chain runs to 95 residues: Large ribosomal subunit protein bL27 (95 aa).

The propeptide occupies Met1–Phe10. The tract at residues His12 to Gln38 is disordered.

This sequence belongs to the bacterial ribosomal protein bL27 family. The N-terminus is cleaved by ribosomal processing cysteine protease Prp.

This is Large ribosomal subunit protein bL27 from Enterococcus faecalis (strain ATCC 700802 / V583).